Reading from the N-terminus, the 292-residue chain is 1,4-dihydroxy-2-naphthoate octaprenyltransferase (292 aa).

The next 6 helical transmembrane spans lie at 35–55, 101–121, 137–157, 166–186, 220–240, and 271–291; these read AAVW…VIGV, ALAG…VGAI, GYAG…AVLG, VDWV…SVLV, LLAV…WCVV, and TGLA…FGQL.

This sequence belongs to the MenA family. Type 1 subfamily. It depends on Mg(2+) as a cofactor.

It localises to the cell membrane. The enzyme catalyses an all-trans-polyprenyl diphosphate + 1,4-dihydroxy-2-naphthoate + H(+) = a 2-demethylmenaquinol + CO2 + diphosphate. Its pathway is quinol/quinone metabolism; menaquinone biosynthesis; menaquinol from 1,4-dihydroxy-2-naphthoate: step 1/2. Its activity is regulated as follows. Activity is abolished by EDTA. Inhibited by Ro 48-8071, which is non-competitive with regard to DHNA and competitive with regard to the isoprenyldiphosphate substrate. Conversion of 1,4-dihydroxy-2-naphthoate (DHNA) to demethylmenaquinone (DMK). Can use a variety of allylic isoprenyl diphosphates as substrates but has a requirement for at least three isoprene units. The polypeptide is 1,4-dihydroxy-2-naphthoate octaprenyltransferase (Mycobacterium tuberculosis (strain ATCC 25618 / H37Rv)).